The primary structure comprises 1014 residues: UvrABC system protein A (1014 aa).

Residue G32 to S39 participates in ATP binding. ABC transporter domains follow at residues W314–Q592 and Q612–R941. G645 to S652 is an ATP binding site. Residues C744 to C770 form a C4-type zinc finger. Low complexity predominate over residues T976–T995. A disordered region spans residues T976 to A1014. Basic residues predominate over residues A996 to A1014.

It belongs to the ABC transporter superfamily. UvrA family. In terms of assembly, forms a heterotetramer with UvrB during the search for lesions.

The protein resides in the cytoplasm. The UvrABC repair system catalyzes the recognition and processing of DNA lesions. UvrA is an ATPase and a DNA-binding protein. A damage recognition complex composed of 2 UvrA and 2 UvrB subunits scans DNA for abnormalities. When the presence of a lesion has been verified by UvrB, the UvrA molecules dissociate. This chain is UvrABC system protein A, found in Streptomyces coelicolor (strain ATCC BAA-471 / A3(2) / M145).